Here is a 333-residue protein sequence, read N- to C-terminus: Putative transporter MamV (333 aa).

A run of 5 helical transmembrane segments spans residues 19-39, 86-106, 111-131, 170-190, and 191-211; these read AWLDMFTALALAVFKTALGVL, FLSANFIGISLMAGAAAMLWY, LGSGHVQVPEVWAVFGALISA, VLAGIVLSILGWVAADHLAAI, and LVSLLVLRIGAVIAWDSIHGL.

Belongs to the cation diffusion facilitator (CDF) transporter (TC 2.A.4) family.

It localises to the cell inner membrane. Its function is as follows. Expression of just the minimal mamAB gene cluster (amb0961 to amb0978), including this gene, is sufficient to form a minimal magnetosome chain with small magnetite particles. In Paramagnetospirillum magneticum (strain ATCC 700264 / AMB-1) (Magnetospirillum magneticum), this protein is Putative transporter MamV.